A 179-amino-acid polypeptide reads, in one-letter code: ATP synthase subunit b (179 aa).

A helical transmembrane segment spans residues Val29–Gly48.

The protein belongs to the ATPase B chain family. As to quaternary structure, F-type ATPases have 2 components, F(1) - the catalytic core - and F(0) - the membrane proton channel. F(1) has five subunits: alpha(3), beta(3), gamma(1), delta(1), epsilon(1). F(0) has four main subunits: a(1), b(1), b'(1) and c(10-14). The alpha and beta chains form an alternating ring which encloses part of the gamma chain. F(1) is attached to F(0) by a central stalk formed by the gamma and epsilon chains, while a peripheral stalk is formed by the delta, b and b' chains.

The protein resides in the cellular thylakoid membrane. Functionally, f(1)F(0) ATP synthase produces ATP from ADP in the presence of a proton or sodium gradient. F-type ATPases consist of two structural domains, F(1) containing the extramembraneous catalytic core and F(0) containing the membrane proton channel, linked together by a central stalk and a peripheral stalk. During catalysis, ATP synthesis in the catalytic domain of F(1) is coupled via a rotary mechanism of the central stalk subunits to proton translocation. Component of the F(0) channel, it forms part of the peripheral stalk, linking F(1) to F(0). Its function is as follows. The complex from the organism is particularly stable to disruption and remains functional after 6 hrs at 55 degrees Celsius. This is ATP synthase subunit b from Thermosynechococcus vestitus (strain NIES-2133 / IAM M-273 / BP-1).